Reading from the N-terminus, the 87-residue chain is UPF0250 protein ESA_02696 (87 aa).

It belongs to the UPF0250 family.

The polypeptide is UPF0250 protein ESA_02696 (Cronobacter sakazakii (strain ATCC BAA-894) (Enterobacter sakazakii)).